Consider the following 760-residue polypeptide: Dipeptidyl peptidase 4 (760 aa).

The Cytoplasmic portion of the chain corresponds to 1 to 6 (MKTPWK). Residues 7–28 (VLLGLLGVAALVTIITVPIVLL) traverse the membrane as a helical; Signal-anchor for type II membrane protein segment. Over 29–760 (SKDEAAADSR…HFLQQCFSLH (732 aa)) the chain is Extracellular. Asn83, Asn90, Asn144, Asn213, Asn223, Asn315, and Asn328 each carry an N-linked (GlcNAc...) asparagine glycan. 4 cysteine pairs are disulfide-bonded: Cys322/Cys333, Cys379/Cys388, Cys438/Cys441, and Cys448/Cys466. Asn514 is a glycosylation site (N-linked (GlcNAc...) asparagine). The Charge relay system role is filled by Ser624. A disulfide bond links Cys643 and Cys756. Residue Asn679 is glycosylated (N-linked (GlcNAc...) asparagine). Catalysis depends on charge relay system residues Asp702 and His734.

The protein belongs to the peptidase S9B family. DPPIV subfamily. Monomer. Homodimer. Heterodimer with Seprase (FAP). Requires homodimerization for optimal dipeptidyl peptidase activity and T-cell costimulation. Found in a membrane raft complex, at least composed of BCL10, CARD11, DPP4 and IKBKB. Associates with collagen. Interacts with PTPRC; the interaction is enhanced in an interleukin-12-dependent manner in activated lymphocytes. Interacts (via extracellular domain) with ADA; does not inhibit its dipeptidyl peptidase activity. Interacts with CAV1 (via the N-terminus); the interaction is direct. Interacts (via cytoplasmic tail) with CARD11 (via PDZ domain); its homodimerization is necessary for interaction with CARD11. Interacts with IGF2R; the interaction is direct. Interacts with GPC3. Post-translationally, the soluble form (Dipeptidyl peptidase 4 soluble form also named SDPP) derives from the membrane form (Dipeptidyl peptidase 4 membrane form also named MDPP) by proteolytic processing. N- and O-Glycosylated. In terms of processing, phosphorylated. Mannose 6-phosphate residues in the carbohydrate moiety are necessary for interaction with IGF2R in activated T-cells. Mannose 6-phosphorylation is induced during T-cell activation.

The protein resides in the secreted. It is found in the cell membrane. It localises to the apical cell membrane. The protein localises to the cell projection. Its subcellular location is the invadopodium membrane. The protein resides in the lamellipodium membrane. It is found in the cell junction. It localises to the membrane raft. The enzyme catalyses Release of an N-terminal dipeptide, Xaa-Yaa-|-Zaa-, from a polypeptide, preferentially when Yaa is Pro, provided Zaa is neither Pro nor hydroxyproline.. Inhibited by GPC3 and diprotin A. Its function is as follows. Cell surface glycoprotein receptor involved in the costimulatory signal essential for T-cell receptor (TCR)-mediated T-cell activation. Acts as a positive regulator of T-cell coactivation, by binding at least ADA, CAV1, IGF2R, and PTPRC. Its binding to CAV1 and CARD11 induces T-cell proliferation and NF-kappa-B activation in a T-cell receptor/CD3-dependent manner. Its interaction with ADA also regulates lymphocyte-epithelial cell adhesion. In association with FAP is involved in the pericellular proteolysis of the extracellular matrix (ECM), the migration and invasion of endothelial cells into the ECM. May be involved in the promotion of lymphatic endothelial cells adhesion, migration and tube formation. When overexpressed, enhanced cell proliferation, a process inhibited by GPC3. Also acts as a serine exopeptidase with a dipeptidyl peptidase activity that regulates various physiological processes by cleaving peptides in the circulation, including many chemokines, mitogenic growth factors, neuropeptides and peptide hormones. Removes N-terminal dipeptides sequentially from polypeptides having unsubstituted N-termini provided that the penultimate residue is proline. In Mus musculus (Mouse), this protein is Dipeptidyl peptidase 4 (Dpp4).